Consider the following 353-residue polypeptide: Methionine import ATP-binding protein MetN (353 aa).

The 241-residue stretch at 11 to 251 folds into the ABC transporter domain; that stretch reads ITFDRVEKSF…PEHPTTRSFL (241 aa). An ATP-binding site is contributed by 48-55; it reads GRSGAGKS.

It belongs to the ABC transporter superfamily. Methionine importer (TC 3.A.1.24) family. In terms of assembly, the complex is composed of two ATP-binding proteins (MetN), two transmembrane proteins (MetI) and a solute-binding protein (MetQ).

Its subcellular location is the cell inner membrane. The enzyme catalyses L-methionine(out) + ATP + H2O = L-methionine(in) + ADP + phosphate + H(+). The catalysed reaction is D-methionine(out) + ATP + H2O = D-methionine(in) + ADP + phosphate + H(+). Part of the ABC transporter complex MetNIQ involved in methionine import. Responsible for energy coupling to the transport system. This chain is Methionine import ATP-binding protein MetN, found in Cereibacter sphaeroides (strain ATCC 17023 / DSM 158 / JCM 6121 / CCUG 31486 / LMG 2827 / NBRC 12203 / NCIMB 8253 / ATH 2.4.1.) (Rhodobacter sphaeroides).